The chain runs to 307 residues: Methionyl-tRNA formyltransferase (307 aa).

Position 109 to 112 (109 to 112 (SLLP)) interacts with (6S)-5,6,7,8-tetrahydrofolate.

Belongs to the Fmt family.

The catalysed reaction is L-methionyl-tRNA(fMet) + (6R)-10-formyltetrahydrofolate = N-formyl-L-methionyl-tRNA(fMet) + (6S)-5,6,7,8-tetrahydrofolate + H(+). In terms of biological role, attaches a formyl group to the free amino group of methionyl-tRNA(fMet). The formyl group appears to play a dual role in the initiator identity of N-formylmethionyl-tRNA by promoting its recognition by IF2 and preventing the misappropriation of this tRNA by the elongation apparatus. This chain is Methionyl-tRNA formyltransferase, found in Dechloromonas aromatica (strain RCB).